We begin with the raw amino-acid sequence, 430 residues long: Enolase (430 aa).

Residue Gln164 participates in (2R)-2-phosphoglycerate binding. Glu208 (proton donor) is an active-site residue. Positions 245, 288, and 315 each coordinate Mg(2+). Positions 340, 369, 370, and 391 each coordinate (2R)-2-phosphoglycerate. Lys340 serves as the catalytic Proton acceptor.

It belongs to the enolase family. Mg(2+) serves as cofactor.

It localises to the cytoplasm. The protein resides in the secreted. It is found in the cell surface. It catalyses the reaction (2R)-2-phosphoglycerate = phosphoenolpyruvate + H2O. The protein operates within carbohydrate degradation; glycolysis; pyruvate from D-glyceraldehyde 3-phosphate: step 4/5. Functionally, catalyzes the reversible conversion of 2-phosphoglycerate (2-PG) into phosphoenolpyruvate (PEP). It is essential for the degradation of carbohydrates via glycolysis. This is Enolase from Thermococcus onnurineus (strain NA1).